The following is a 529-amino-acid chain: Bifunctional purine biosynthesis protein PurH (529 aa).

An MGS-like domain is found at Met-1 to Val-148. Position 287 is an N6-acetyllysine (Lys-287).

The protein belongs to the PurH family.

It carries out the reaction (6R)-10-formyltetrahydrofolate + 5-amino-1-(5-phospho-beta-D-ribosyl)imidazole-4-carboxamide = 5-formamido-1-(5-phospho-D-ribosyl)imidazole-4-carboxamide + (6S)-5,6,7,8-tetrahydrofolate. The catalysed reaction is IMP + H2O = 5-formamido-1-(5-phospho-D-ribosyl)imidazole-4-carboxamide. It participates in purine metabolism; IMP biosynthesis via de novo pathway; 5-formamido-1-(5-phospho-D-ribosyl)imidazole-4-carboxamide from 5-amino-1-(5-phospho-D-ribosyl)imidazole-4-carboxamide (10-formyl THF route): step 1/1. Its pathway is purine metabolism; IMP biosynthesis via de novo pathway; IMP from 5-formamido-1-(5-phospho-D-ribosyl)imidazole-4-carboxamide: step 1/1. The sequence is that of Bifunctional purine biosynthesis protein PurH from Escherichia coli O17:K52:H18 (strain UMN026 / ExPEC).